Here is a 652-residue protein sequence, read N- to C-terminus: MSDNKWLRNGFVWMILIIAAIAVWVTFVQGGRGGATITTQEMAADIKAGKVERLVMTSGSDEIQVQYIGTNEVRTLRLPPNVDIFELLKTFGIDPQQVDIQTHRASQWGNVLGTLTFLLPTLFLIGVIIFMMRQAQGTNNQALSFGKSRARVFTSNRPTVTFDDVAGVDEAKEELQEIVEFLKYPEKFAALGARIPRGVLLVGPPGTGKTLLSRAVAGEAGVPFFSISGSEFVEMFVGVGASRVRDLFDQAKRNAPCIVFIDEIDAVGRQRGAGLGGSHDEREQTLNQILVEMDGFDSSTNVIVIAATNRPDVLDPALLRPGRFDRQVVLDRPDLHGRLAILKVHTRGKPLESDVDLEDLARQTPGFSGADLENLVNEAAILAARRNKKTIGRRELYEAIDRVVAGPERKSRRISEREKLMTAYHEAGHALVARMLPHADPVHKVSIVARGMMGGYTRVLPEEDRFFWTKKQFEAQLAVFMAGLVAEELVFQEVSTGAANDIERATTLARRMVTEFGMSERLGPLAFGRKEELVFLGREIAEQRNYSDQVAYEIDQEVRRLIDQAYQTAKQILLDHMDKLEKIATLLVEKETLDGHEIEALFDEPRPRPELVGPPLTRPAALIATPETARPDSPSEARPAAPVPHIKPQPAS.

At 1–9 the chain is on the cytoplasmic side; it reads MSDNKWLRN. Residues 10 to 30 traverse the membrane as a helical segment; that stretch reads GFVWMILIIAAIAVWVTFVQG. Over 31–110 the chain is Extracellular; that stretch reads GRGGATITTQ…QTHRASQWGN (80 aa). The chain crosses the membrane as a helical span at residues 111–131; it reads VLGTLTFLLPTLFLIGVIIFM. Over 132–652 the chain is Cytoplasmic; the sequence is MRQAQGTNNQ…VPHIKPQPAS (521 aa). 203–210 contributes to the ATP binding site; that stretch reads GPPGTGKT. H425 provides a ligand contact to Zn(2+). Residue E426 is part of the active site. Zn(2+) is bound by residues H429 and D501. The segment at 623–652 is disordered; sequence IATPETARPDSPSEARPAAPVPHIKPQPAS. The segment covering 641 to 652 has biased composition (pro residues); it reads APVPHIKPQPAS.

The protein in the central section; belongs to the AAA ATPase family. It in the C-terminal section; belongs to the peptidase M41 family. Homohexamer. Zn(2+) is required as a cofactor.

It is found in the cell membrane. In terms of biological role, acts as a processive, ATP-dependent zinc metallopeptidase for both cytoplasmic and membrane proteins. Plays a role in the quality control of integral membrane proteins. This chain is ATP-dependent zinc metalloprotease FtsH 1, found in Thermomicrobium roseum (strain ATCC 27502 / DSM 5159 / P-2).